The following is a 417-amino-acid chain: RH-like protein (417 aa).

11 consecutive transmembrane segments (helical) span residues 12-32 (CLPLWALTLEAALILLFFFFT), 44-64 (LVASYQVCQDLTVMAVLGLGF), 77-97 (VAFNLFLLALGVQWAILLDGF), 125-145 (ISMNAVLGKVNLVQLVVMELV), 172-192 (IHVFAAYFGLTVAWCLPKPLP), 203-223 (TSPSLFAMLGTLFLWMFWPTF), 238-258 (VFSTYYALAVSAVTAISVSSL), 265-285 (INMTYMHNAALAGGVALSASC), 287-307 (VIHSPWIAMVLGLVAGLISIG), 331-351 (TFGLPALLGEITYIVLMALRV), and 358-378 (MIGFQVLLSTGTLSLAMAMSI).

The protein belongs to the ammonium transporter (TC 2.A.49) family. Rh subfamily.

It localises to the membrane. May be part of an oligomeric complex which is likely to have a transport or channel function in the erythrocyte membrane. This Macaca mulatta (Rhesus macaque) protein is RH-like protein.